The primary structure comprises 567 residues: Proline--tRNA ligase (567 aa).

The protein belongs to the class-II aminoacyl-tRNA synthetase family. ProS type 1 subfamily. As to quaternary structure, homodimer.

The protein resides in the cytoplasm. The enzyme catalyses tRNA(Pro) + L-proline + ATP = L-prolyl-tRNA(Pro) + AMP + diphosphate. In terms of biological role, catalyzes the attachment of proline to tRNA(Pro) in a two-step reaction: proline is first activated by ATP to form Pro-AMP and then transferred to the acceptor end of tRNA(Pro). As ProRS can inadvertently accommodate and process non-cognate amino acids such as alanine and cysteine, to avoid such errors it has two additional distinct editing activities against alanine. One activity is designated as 'pretransfer' editing and involves the tRNA(Pro)-independent hydrolysis of activated Ala-AMP. The other activity is designated 'posttransfer' editing and involves deacylation of mischarged Ala-tRNA(Pro). The misacylated Cys-tRNA(Pro) is not edited by ProRS. The protein is Proline--tRNA ligase of Campylobacter curvus (strain 525.92).